The chain runs to 375 residues: Ribonuclease D (375 aa).

The region spanning 3–169 is the 3'-5' exonuclease domain; sequence YQMITTDDAL…LPITAKLMVE (167 aa). One can recognise an HRDC domain in the interval 210-289; sequence RTRQLACLQL…EKAQTLPEDA (80 aa).

This sequence belongs to the RNase D family. A divalent metal cation serves as cofactor.

The protein localises to the cytoplasm. The enzyme catalyses Exonucleolytic cleavage that removes extra residues from the 3'-terminus of tRNA to produce 5'-mononucleotides.. Exonuclease involved in the 3' processing of various precursor tRNAs. Initiates hydrolysis at the 3'-terminus of an RNA molecule and releases 5'-mononucleotides. This chain is Ribonuclease D, found in Escherichia coli (strain K12).